The following is a 57-amino-acid chain: uncharacterized protein (57 aa).

The interval 1–57 (MITPIGKNSNSNSNSNSNSNSNSNSNSNSNSNSNSNSNSNSNSNSNSNSNSNSNSNN) is disordered. The segment covering 8-57 (NSNSNSNSNSNSNSNSNSNSNSNSNSNSNSNSNSNSNSNSNSNSNSNSNN) has biased composition (low complexity).

This is an uncharacterized protein from Dictyostelium discoideum (Social amoeba).